Here is a 255-residue protein sequence, read N- to C-terminus: Alpha-acetolactate decarboxylase (255 aa).

It belongs to the alpha-acetolactate decarboxylase family.

It carries out the reaction (2S)-2-acetolactate + H(+) = (R)-acetoin + CO2. It participates in polyol metabolism; (R,R)-butane-2,3-diol biosynthesis; (R,R)-butane-2,3-diol from pyruvate: step 2/3. Its function is as follows. Converts acetolactate into acetoin, which can be excreted by the cells. This may be a mechanism for controlling the internal pH of cells in the stationary stage. This is Alpha-acetolactate decarboxylase (alsD) from Bacillus subtilis (strain 168).